A 227-amino-acid chain; its full sequence is PKHD-type hydroxylase BamMC406_5004 (227 aa).

Positions 80 to 179 (QVYPPLFNRY…RVASFFWVQS (100 aa)) constitute a Fe2OG dioxygenase domain. 3 residues coordinate Fe cation: His-98, Asp-100, and His-160. A 2-oxoglutarate-binding site is contributed by Arg-170.

Requires Fe(2+) as cofactor. L-ascorbate is required as a cofactor.

In Burkholderia ambifaria (strain MC40-6), this protein is PKHD-type hydroxylase BamMC406_5004.